Here is a 229-residue protein sequence, read N- to C-terminus: Ras-related protein Rab-33B (229 aa).

The GTP site is built by Asn43, Val44, Gly45, Lys46, Thr47, Cys48, Thr62, and Thr65. Thr47 is a Mg(2+) binding site. The Switch 1 motif lies at 56 to 68; it reads GRFPDRTEATIGV. Positions 65 and 88 each coordinate Mg(2+). The short motif at 89–108 is the Switch 2 element; the sequence is TAGQERFRKSMVQHYYRNVH. GTP is bound by residues Gly91, Asn148, Lys149, Asp151, Ala179, and Lys180. S-geranylgeranyl cysteine attachment occurs at residues Cys227 and Cys229. Cysteine methyl ester is present on Cys229.

The protein belongs to the small GTPase superfamily. Rab family. As to quaternary structure, interacts (GTP- and GDP-bound forms) with ATG16L1; the complex consists of a tetramer where two RAB33B molecules bind independently one molecule of the ATG16L1 homodimer; the interaction promotes ATG12-ATG5-ATG16L1 complex recruitment to phagophores. Interacts with ATG16L2; however interaction is approximately hundred times lower than for ATG16L1. Interacts with RIC1 (via C-terminus domain); the interaction is direct with a preference for RAB33B-GTP. Interacts with RGP1. Mg(2+) serves as cofactor. Prenylated.

The protein localises to the golgi apparatus membrane. It is found in the golgi apparatus. Its subcellular location is the cis-Golgi network. The protein resides in the preautophagosomal structure membrane. The enzyme catalyses GTP + H2O = GDP + phosphate + H(+). With respect to regulation, regulated by guanine nucleotide exchange factors (GEFs) which promote the exchange of bound GDP for free GTP. Regulated by GTPase activating proteins (GAPs) such as SGSM2 which increase the GTP hydrolysis activity. Inhibited by GDP dissociation inhibitors (GDIs). In terms of biological role, the small GTPases Rab are key regulators of intracellular membrane trafficking, from the formation of transport vesicles to their fusion with membranes. Rabs cycle between an inactive GDP-bound form and an active GTP-bound form that is able to recruit to membranes different sets of downstream effectors directly responsible for vesicle formation, movement, tethering and fusion. RAB33B acts, in coordination with RAB6A, to regulate intra-Golgi retrograde trafficking. Participates in autophagosome formation by recruiting the ATG12-ATG5-ATG16L1 complex to phagophores, probably in a nucleotide-independent manner. The chain is Ras-related protein Rab-33B from Homo sapiens (Human).